The chain runs to 164 residues: Protein-export protein SecB (164 aa).

The protein belongs to the SecB family. In terms of assembly, homotetramer, a dimer of dimers. One homotetramer interacts with 1 SecA dimer.

The protein localises to the cytoplasm. One of the proteins required for the normal export of preproteins out of the cell cytoplasm. It is a molecular chaperone that binds to a subset of precursor proteins, maintaining them in a translocation-competent state. It also specifically binds to its receptor SecA. This Nitrosococcus oceani (strain ATCC 19707 / BCRC 17464 / JCM 30415 / NCIMB 11848 / C-107) protein is Protein-export protein SecB.